The chain runs to 203 residues: 3-isopropylmalate dehydratase small subunit (203 aa).

This sequence belongs to the LeuD family. LeuD type 1 subfamily. In terms of assembly, heterodimer of LeuC and LeuD.

The catalysed reaction is (2R,3S)-3-isopropylmalate = (2S)-2-isopropylmalate. Its pathway is amino-acid biosynthesis; L-leucine biosynthesis; L-leucine from 3-methyl-2-oxobutanoate: step 2/4. In terms of biological role, catalyzes the isomerization between 2-isopropylmalate and 3-isopropylmalate, via the formation of 2-isopropylmaleate. This chain is 3-isopropylmalate dehydratase small subunit, found in Phenylobacterium zucineum (strain HLK1).